We begin with the raw amino-acid sequence, 95 residues long: Secreted RxLR effector protein 20 (95 aa).

The N-terminal stretch at 1 to 20 (MQSPYIILFALVTLLGSISG) is a signal peptide. A RxLR motif is present at residues 47 to 50 (RLLR).

The protein belongs to the RxLR effector family.

It localises to the secreted. The protein localises to the host nucleus. It is found in the host cytoplasm. Functionally, secreted effector that partially suppresses the host cell death induced by cell death-inducing proteins. This chain is Secreted RxLR effector protein 20, found in Plasmopara viticola (Downy mildew of grapevine).